The primary structure comprises 316 residues: ATP synthase gamma chain (316 aa).

The protein belongs to the ATPase gamma chain family. F-type ATPases have 2 components, CF(1) - the catalytic core - and CF(0) - the membrane proton channel. CF(1) has five subunits: alpha(3), beta(3), gamma(1), delta(1), epsilon(1). CF(0) has three main subunits: a, b and c.

The protein resides in the cellular thylakoid membrane. In terms of biological role, produces ATP from ADP in the presence of a proton gradient across the membrane. The gamma chain is believed to be important in regulating ATPase activity and the flow of protons through the CF(0) complex. The protein is ATP synthase gamma chain of Synechococcus sp. (strain WH7803).